The chain runs to 237 residues: 1-(5-phosphoribosyl)-5-[(5-phosphoribosylamino)methylideneamino] imidazole-4-carboxamide isomerase (237 aa).

Aspartate 8 acts as the Proton acceptor in catalysis. Aspartate 129 (proton donor) is an active-site residue.

This sequence belongs to the HisA/HisF family.

It localises to the cytoplasm. The catalysed reaction is 1-(5-phospho-beta-D-ribosyl)-5-[(5-phospho-beta-D-ribosylamino)methylideneamino]imidazole-4-carboxamide = 5-[(5-phospho-1-deoxy-D-ribulos-1-ylimino)methylamino]-1-(5-phospho-beta-D-ribosyl)imidazole-4-carboxamide. Its pathway is amino-acid biosynthesis; L-histidine biosynthesis; L-histidine from 5-phospho-alpha-D-ribose 1-diphosphate: step 4/9. The protein is 1-(5-phosphoribosyl)-5-[(5-phosphoribosylamino)methylideneamino] imidazole-4-carboxamide isomerase of Alkaliphilus metalliredigens (strain QYMF).